The chain runs to 266 residues: Signal peptidase I (266 aa).

Residues 1–20 (MQTDNTKSNTNKTAKQEWGS) lie on the Cytoplasmic side of the membrane. The helical transmembrane segment at 21 to 41 (FVFVICIALLIRILIMEPFTV) threads the bilayer. The Periplasmic segment spans residues 42 to 266 (PTGSMKATIL…IFRNLYNTDV (225 aa)). Active-site residues include serine 45 and lysine 108.

Belongs to the peptidase S26 family.

It is found in the cell inner membrane. The catalysed reaction is Cleavage of hydrophobic, N-terminal signal or leader sequences from secreted and periplasmic proteins.. In Rickettsia massiliae (strain Mtu5), this protein is Signal peptidase I (lepB).